The sequence spans 368 residues: Membrane glycoprotein UL18 (368 aa).

The N-terminal stretch at 1–19 (MMTMWCLTLFVLWMLRVVG) is a signal peptide. A helical membrane pass occupies residues 326–346 (ISSVLLALLLCALLFAFLHYF).

As to quaternary structure, interacts with host LILRB1.

The protein resides in the host membrane. Functionally, plays a role in the protection against host NK cell cytotoxicity by interacting with and modulating the activity of the host inhibitory leukocyte Ig-like receptor 1/LILRB1, which is expressed on monocytes, dendritic cells, as well as subsets of T and NK cells. UL18 exerts an inhibitory effect on LIR-1+ NK cells, while it stimulates LIR-1- NK cell. This chain is Membrane glycoprotein UL18 (UL18), found in Homo sapiens (Human).